The sequence spans 812 residues: ATP-dependent zinc metalloprotease FtsH (812 aa).

Residues 1–21 (MPPSPPRPPKFPGSGRPESPN) lie on the Cytoplasmic side of the membrane. The helical transmembrane segment at 22-42 (WGVWVMVLLIVGVLAFGFFTP) threads the bilayer. Residues 43 to 241 (ESFGLGPRKE…TKFKRESGSW (199 aa)) lie on the Extracellular side of the membrane. A helical transmembrane segment spans residues 242–262 (GGILLNLLPIVLILVILFFMF). Residues 263–812 (RAQSGGARGA…EFGKDGGEKK (550 aa)) are Cytoplasmic-facing. An ATP-binding site is contributed by 333–340 (GAPGTGKT). Position 555 (H555) interacts with Zn(2+). Residue E556 is part of the active site. The Zn(2+) site is built by H559 and D631. Residues 739 to 812 (KNPPARVTPP…EFGKDGGEKK (74 aa)) form a disordered region. Composition is skewed to basic and acidic residues over residues 757 to 785 (QPGK…RKME) and 803 to 812 (EFGKDGGEKK).

The protein in the central section; belongs to the AAA ATPase family. This sequence in the C-terminal section; belongs to the peptidase M41 family. In terms of assembly, homohexamer. Zn(2+) serves as cofactor.

The protein localises to the cell membrane. In terms of biological role, acts as a processive, ATP-dependent zinc metallopeptidase for both cytoplasmic and membrane proteins. Plays a role in the quality control of integral membrane proteins. This Akkermansia muciniphila (strain ATCC BAA-835 / DSM 22959 / JCM 33894 / BCRC 81048 / CCUG 64013 / CIP 107961 / Muc) protein is ATP-dependent zinc metalloprotease FtsH.